Here is a 290-residue protein sequence, read N- to C-terminus: 4-diphosphocytidyl-2-C-methyl-D-erythritol kinase (290 aa).

The active site involves Lys13. 96–106 is a binding site for ATP; the sequence is PMGGGIGGGSS. Asp138 is an active-site residue.

Belongs to the GHMP kinase family. IspE subfamily.

The enzyme catalyses 4-CDP-2-C-methyl-D-erythritol + ATP = 4-CDP-2-C-methyl-D-erythritol 2-phosphate + ADP + H(+). The protein operates within isoprenoid biosynthesis; isopentenyl diphosphate biosynthesis via DXP pathway; isopentenyl diphosphate from 1-deoxy-D-xylulose 5-phosphate: step 3/6. Its function is as follows. Catalyzes the phosphorylation of the position 2 hydroxy group of 4-diphosphocytidyl-2C-methyl-D-erythritol. This Vibrio cholerae serotype O1 (strain ATCC 39541 / Classical Ogawa 395 / O395) protein is 4-diphosphocytidyl-2-C-methyl-D-erythritol kinase.